The following is a 155-amino-acid chain: Ribosome maturation factor RimP (155 aa).

This sequence belongs to the RimP family.

The protein localises to the cytoplasm. Functionally, required for maturation of 30S ribosomal subunits. The polypeptide is Ribosome maturation factor RimP (Prochlorococcus marinus (strain MIT 9211)).